The chain runs to 559 residues: Apolipoprotein N-acyltransferase 2 (559 aa).

A run of 6 helical transmembrane segments spans residues L27–L47, H53–L73, A86–L106, A114–A134, I153–V173, and V187–G207. Residues L221–P507 enclose the CN hydrolase domain. E288 (proton acceptor) is an active-site residue. K358 is an active-site residue. C416 functions as the Nucleophile in the catalytic mechanism. The chain crosses the membrane as a helical span at residues W519–T539.

Belongs to the CN hydrolase family. Apolipoprotein N-acyltransferase subfamily.

Its subcellular location is the cell inner membrane. It carries out the reaction N-terminal S-1,2-diacyl-sn-glyceryl-L-cysteinyl-[lipoprotein] + a glycerophospholipid = N-acyl-S-1,2-diacyl-sn-glyceryl-L-cysteinyl-[lipoprotein] + a 2-acyl-sn-glycero-3-phospholipid + H(+). It participates in protein modification; lipoprotein biosynthesis (N-acyl transfer). In terms of biological role, catalyzes the phospholipid dependent N-acylation of the N-terminal cysteine of apolipoprotein, the last step in lipoprotein maturation. The protein is Apolipoprotein N-acyltransferase 2 of Treponema pallidum (strain Nichols).